The sequence spans 522 residues: Bifunctional purine biosynthesis protein PurH (522 aa).

The MGS-like domain maps to Met1–Val143.

It belongs to the PurH family.

The enzyme catalyses (6R)-10-formyltetrahydrofolate + 5-amino-1-(5-phospho-beta-D-ribosyl)imidazole-4-carboxamide = 5-formamido-1-(5-phospho-D-ribosyl)imidazole-4-carboxamide + (6S)-5,6,7,8-tetrahydrofolate. It catalyses the reaction IMP + H2O = 5-formamido-1-(5-phospho-D-ribosyl)imidazole-4-carboxamide. It functions in the pathway purine metabolism; IMP biosynthesis via de novo pathway; 5-formamido-1-(5-phospho-D-ribosyl)imidazole-4-carboxamide from 5-amino-1-(5-phospho-D-ribosyl)imidazole-4-carboxamide (10-formyl THF route): step 1/1. It participates in purine metabolism; IMP biosynthesis via de novo pathway; IMP from 5-formamido-1-(5-phospho-D-ribosyl)imidazole-4-carboxamide: step 1/1. This chain is Bifunctional purine biosynthesis protein PurH, found in Sorangium cellulosum (strain So ce56) (Polyangium cellulosum (strain So ce56)).